Consider the following 67-residue polypeptide: Small ribosomal subunit protein eS17 (67 aa).

The protein belongs to the eukaryotic ribosomal protein eS17 family.

The chain is Small ribosomal subunit protein eS17 from Thermococcus gammatolerans (strain DSM 15229 / JCM 11827 / EJ3).